Here is a 321-residue protein sequence, read N- to C-terminus: Large ribosomal subunit protein uL10 (321 aa).

The tract at residues 284 to 321 is disordered; it reads SAGTAPTGGGAAAAAVEEKKEEPEEESDDDIGFSLFDD. Positions 306-321 are enriched in acidic residues; it reads PEEESDDDIGFSLFDD.

The protein belongs to the universal ribosomal protein uL10 family. In terms of assembly, P0 forms a pentameric complex by interaction with dimers of P1 and P2. Post-translationally, phosphorylated.

Functionally, ribosomal protein P0 is the functional equivalent of E.coli protein L10. The protein is Large ribosomal subunit protein uL10 of Oxybasis rubra (Red goosefoot).